The sequence spans 112 residues: Putative pterin-4-alpha-carbinolamine dehydratase (112 aa).

It belongs to the pterin-4-alpha-carbinolamine dehydratase family.

It carries out the reaction (4aS,6R)-4a-hydroxy-L-erythro-5,6,7,8-tetrahydrobiopterin = (6R)-L-erythro-6,7-dihydrobiopterin + H2O. The protein is Putative pterin-4-alpha-carbinolamine dehydratase of Shewanella frigidimarina (strain NCIMB 400).